The following is a 77-amino-acid chain: Pi-stichotoxin-Hmg5a (77 aa).

The N-terminal stretch at 1 to 21 (MDYQRLLFLFAVAMVITTTVA) is a signal peptide. Residues 22–34 (LPQDTALMDGQLQ) constitute a propeptide that is removed on maturation. Intrachain disulfides connect C40-C73, C42-C66, and C56-C74.

It belongs to the sea anemone type 3 (BDS) potassium channel toxin family.

The protein localises to the secreted. Its subcellular location is the nematocyst. In terms of biological role, toxin that inhibits rat ASIC3 channels (IC(50)=13.8 uM). Also able to bind T.californica muscle-type nicotinic acetylcholine receptors (nAChR), and human alpha-7/CHRNA7 nicotinic acetylcholine receptors. The sequence is that of Pi-stichotoxin-Hmg5a from Heteractis magnifica (Magnificent sea anemone).